The following is a 79-amino-acid chain: Small ribosomal subunit protein bS16 (79 aa).

Belongs to the bacterial ribosomal protein bS16 family.

This chain is Small ribosomal subunit protein bS16, found in Oleidesulfovibrio alaskensis (strain ATCC BAA-1058 / DSM 17464 / G20) (Desulfovibrio alaskensis).